The sequence spans 93 residues: MPAQAVVTLRYGPYSAVGLSVEHRTYRLQGLQAVLAKDGHQIILEQIEDWNLVELVVNEETVFQCDIQELEFGGDGKLDPLCEEARIAVLNAF.

It belongs to the UPF0728 family.

This is UPF0728 protein C10orf53 homolog from Mus musculus (Mouse).